Here is a 640-residue protein sequence, read N- to C-terminus: Threonine--tRNA ligase (640 aa).

The region spanning 1-61 (MPTITLPDGS…ACDADVTIIT (61 aa)) is the TGS domain. A catalytic region spans residues 243–534 (DHRKIGKALD…LIEQYAGNMP (292 aa)). Residues C334, H385, and H511 each coordinate Zn(2+).

It belongs to the class-II aminoacyl-tRNA synthetase family. In terms of assembly, homodimer. Requires Zn(2+) as cofactor.

It is found in the cytoplasm. It carries out the reaction tRNA(Thr) + L-threonine + ATP = L-threonyl-tRNA(Thr) + AMP + diphosphate + H(+). Catalyzes the attachment of threonine to tRNA(Thr) in a two-step reaction: L-threonine is first activated by ATP to form Thr-AMP and then transferred to the acceptor end of tRNA(Thr). Also edits incorrectly charged L-seryl-tRNA(Thr). The chain is Threonine--tRNA ligase from Dichelobacter nodosus (strain VCS1703A).